Here is a 494-residue protein sequence, read N- to C-terminus: Glutamate--tRNA ligase (494 aa).

The 'HIGH' region motif lies at 10–20 (PSPTGDPHVGT). Zn(2+) is bound by residues Cys-107, Cys-109, Cys-134, and His-136. A 'KMSKS' region motif is present at residues 251 to 255 (KLSKR). Lys-254 contributes to the ATP binding site.

The protein belongs to the class-I aminoacyl-tRNA synthetase family. Glutamate--tRNA ligase type 1 subfamily. As to quaternary structure, monomer. Zn(2+) is required as a cofactor.

The protein resides in the cytoplasm. It catalyses the reaction tRNA(Glu) + L-glutamate + ATP = L-glutamyl-tRNA(Glu) + AMP + diphosphate. In terms of biological role, catalyzes the attachment of glutamate to tRNA(Glu) in a two-step reaction: glutamate is first activated by ATP to form Glu-AMP and then transferred to the acceptor end of tRNA(Glu). This chain is Glutamate--tRNA ligase, found in Pseudomonas aeruginosa (strain UCBPP-PA14).